Consider the following 290-residue polypeptide: MRFDEAYSGKVFIKSHPSFEESKVVIYGMPMDWTVSYRPGSRFGPARIREVSIGLEEYSPYLDRELEEVKYFDAGDIPLPFGNAQRSLDMIEEYVSKLLDADKFPLGLGGEHLVSWPIFKAMAKKYPDLAIIHMDAHTDLRESYEGEPLSHSTPIRKVCDLIGPENVYSFGIRSGMKEEFEWAKEVGMNLYKFDVLEPLKEVLPKLAGRPVYVTIDIDVLDPAHAPGTGTLEAGGITSKELLDSIVAIANSNINVVGADLVEVAPVYDHSDQTPVAASKFVREMLLGWVK.

Mn(2+)-binding residues include His112, Asp135, His137, Asp139, Asp216, and Asp218.

Belongs to the arginase family. Agmatinase subfamily. Requires Mn(2+) as cofactor.

It catalyses the reaction agmatine + H2O = urea + putrescine. It participates in amine and polyamine biosynthesis; putrescine biosynthesis via agmatine pathway; putrescine from agmatine: step 1/1. Catalyzes the formation of putrescine from agmatine. In Bacillus cereus (strain ATCC 14579 / DSM 31 / CCUG 7414 / JCM 2152 / NBRC 15305 / NCIMB 9373 / NCTC 2599 / NRRL B-3711), this protein is Agmatinase (speB).